The following is a 91-amino-acid chain: Bombyxin B-1 homolog (91 aa).

The N-terminal stretch at 1–19 is a signal peptide; the sequence is MKVSMFVVIVLCMVAASSA. 3 disulfide bridges follow: Cys-27/Cys-78, Cys-39/Cys-91, and Cys-77/Cys-82. The propeptide at 49-69 is c peptide like; sequence SGAQYARYGWQSPESREGARG.

This sequence belongs to the insulin family. As to quaternary structure, heterodimer of a B chain and an A chain linked by two disulfide bonds.

The protein localises to the secreted. Brain peptide responsible for activation of prothoracic glands to produce ecdysone in insects. The chain is Bombyxin B-1 homolog (SBXB1) from Samia cynthia (Ailanthus silkmoth).